Here is a 361-residue protein sequence, read N- to C-terminus: Peptide chain release factor 1 (361 aa).

Glutamine 237 carries the post-translational modification N5-methylglutamine. Positions 285 to 296 are enriched in basic and acidic residues; sequence DEKRRSAEESTR. The tract at residues 285 to 305 is disordered; the sequence is DEKRRSAEESTRRNLVSSGDR.

This sequence belongs to the prokaryotic/mitochondrial release factor family. Methylated by PrmC. Methylation increases the termination efficiency of RF1.

Its subcellular location is the cytoplasm. Functionally, peptide chain release factor 1 directs the termination of translation in response to the peptide chain termination codons UAG and UAA. The sequence is that of Peptide chain release factor 1 from Shewanella halifaxensis (strain HAW-EB4).